An 843-amino-acid chain; its full sequence is Tetratricopeptide repeat protein 7B (843 aa).

One copy of the TPR 1 repeat lies at 97–131 (QESNLVMAKLTYVEGDYKEALNIYARVGLDDLPLT). 2 positions are modified to phosphoserine: S160 and S202. 6 TPR repeats span residues 219–252 (ETGL…VETR), 363–396 (SVVY…AFEE), 397–430 (FHLW…KPDD), 479–514 (TYSL…SPTD), 516–548 (QAAF…QGDD), and 549–582 (ANSL…YPEN). Phosphoserine occurs at positions 625, 629, 630, 673, 677, 678, and 681. TPR repeat units follow at residues 696–729 (AQIW…FPMS), 730–763 (HNVL…SPTH), 765–797 (KSMQ…NSTA), and 798–831 (HEVW…EASS).

As to quaternary structure, component of a phosphatidylinositol 4-kinase (PI4K) complex, composed of PI4KA, EFR3 (EFR3A or EFR3B), TTC7 (TTC7A or TTC7B) and HYCC (HYCC1 or HYCC2). Interacts with PI4KA, interaction is direct. Interacts with EFR3 (EFR3A or EFR3B), interaction is direct. Interacts with HYCC (HYCC1 or HYCC2), interaction is direct. Association with the PI4K complex is strongly reduced by TMEM150A.

The protein localises to the cytoplasm. The protein resides in the cytosol. Its subcellular location is the cell membrane. Functionally, component of a complex required to localize phosphatidylinositol 4-kinase (PI4K) to the plasma membrane. The complex acts as a regulator of phosphatidylinositol 4-phosphate (PtdIns(4)P) synthesis. In the complex, plays a central role in bridging PI4KA to EFR3B and HYCC1, via direct interactions. This is Tetratricopeptide repeat protein 7B from Mus musculus (Mouse).